A 56-amino-acid polypeptide reads, in one-letter code: Large ribosomal subunit protein bL33 (56 aa).

It belongs to the bacterial ribosomal protein bL33 family.

In Marinomonas sp. (strain MWYL1), this protein is Large ribosomal subunit protein bL33.